The sequence spans 253 residues: Imidazole glycerol phosphate synthase subunit HisF (253 aa).

Active-site residues include Asp11 and Asp130.

This sequence belongs to the HisA/HisF family. In terms of assembly, heterodimer of HisH and HisF.

It localises to the cytoplasm. The catalysed reaction is 5-[(5-phospho-1-deoxy-D-ribulos-1-ylimino)methylamino]-1-(5-phospho-beta-D-ribosyl)imidazole-4-carboxamide + L-glutamine = D-erythro-1-(imidazol-4-yl)glycerol 3-phosphate + 5-amino-1-(5-phospho-beta-D-ribosyl)imidazole-4-carboxamide + L-glutamate + H(+). The protein operates within amino-acid biosynthesis; L-histidine biosynthesis; L-histidine from 5-phospho-alpha-D-ribose 1-diphosphate: step 5/9. In terms of biological role, IGPS catalyzes the conversion of PRFAR and glutamine to IGP, AICAR and glutamate. The HisF subunit catalyzes the cyclization activity that produces IGP and AICAR from PRFAR using the ammonia provided by the HisH subunit. In Ruminiclostridium cellulolyticum (strain ATCC 35319 / DSM 5812 / JCM 6584 / H10) (Clostridium cellulolyticum), this protein is Imidazole glycerol phosphate synthase subunit HisF.